Consider the following 116-residue polypeptide: Large ribosomal subunit protein bL17 (116 aa).

Belongs to the bacterial ribosomal protein bL17 family. Part of the 50S ribosomal subunit. Contacts protein L32.

The sequence is that of Large ribosomal subunit protein bL17 from Synechococcus sp. (strain CC9902).